The chain runs to 240 residues: Ubiquinone biosynthesis O-methyltransferase (240 aa).

Residues Arg44, Gly64, Asp85, and Met129 each contribute to the S-adenosyl-L-methionine site.

This sequence belongs to the methyltransferase superfamily. UbiG/COQ3 family.

It catalyses the reaction a 3-demethylubiquinol + S-adenosyl-L-methionine = a ubiquinol + S-adenosyl-L-homocysteine + H(+). The enzyme catalyses a 3-(all-trans-polyprenyl)benzene-1,2-diol + S-adenosyl-L-methionine = a 2-methoxy-6-(all-trans-polyprenyl)phenol + S-adenosyl-L-homocysteine + H(+). Its pathway is cofactor biosynthesis; ubiquinone biosynthesis. Functionally, O-methyltransferase that catalyzes the 2 O-methylation steps in the ubiquinone biosynthetic pathway. The sequence is that of Ubiquinone biosynthesis O-methyltransferase from Escherichia coli (strain UTI89 / UPEC).